We begin with the raw amino-acid sequence, 1149 residues long: MASASGAENSSVPPSPLPPPPPPQIHTSRTKLSHHHHNNNNNNNNNIDSTSKAIAQYTEDARLHAVFEQSGESGRSFDYSQSIRVTSESVPEQQITAYLLKIQRGGFIQPFGSMIAVDEPSFRILAYSDNARDMLGITPQSVPSLDDKNDAAFALGTDIRTLFTHSSAVLLEKAFSAREISLMNPIWIHSRTSGKPFYGILHRIDVGIVIDLEPARTEDPALSIAGAVQSQKLAVRAISQLQSLPGGDVKLLCDTVVESVRELTGYDRVMVYRFHEDEHGEVVAETKRPDLEPYIGLHYPATDIPQASRFLFKQNRVRMIVDCHASAVRVVQDEALVQPLCLVGSTLRAPHGCHAQYMANMGSTASLVMAVIINGNDEEGVGGRTSMRLWGLVVCHHTSARCIPFPLRYACEFLMQAFGLQLNMELQLAAQSLEKRVLRTQTLLCDMLLRDSPTGIVTQSPSIMDLVKCDGAALYYQGNYYPLGVTPTEAQIRDIIEWLLAFHRDSTGLSTDSLADAGYPGAASLGDAVCGMAVAYITEKDFLFWFRSHTAKEIKWGGAKHHPEDKDDGQRMHPRSSFKAFLEVVKSRSLPWENAEMDAIHSLQLILRDSFKDAEHSNSKAVLDPRMSELELQGVDELSSVAREMVRLIETATAPIFAVDVDGRINGWNAKVSELTGLPVEEAMGKSLVRDLVFKESEETVDKLLSRALKGEEDKNVEIKMRTFGPEHQNKAVFVVVNACSSKDYTNNVVGVCFVGQDVTGQKIVMDKFINIQGDYKAIVHNPNPLIPPIFASDDNTCCLEWNTAMEKLTGWSRADVIGKMLVGEVFGSCCQLKGSDSITKFMIVLHNALGGHDTDRFPFSFLDRYGKHVQAFLTANKRVNMDGQIIGAFCFLQIVSPELQQALKAQRQQEKNSFARMKELAYICQGVKNPLSGIRFTNSLLEATCLSNEQKQFLETSAACEKQMLKIIHDVDIESIEDGSLELEKGEFLLGNVINAVVSQVMLLLRERNLQLIRDIPEEIKTLAVYGDQLRIQQVLSDFLLNIVRYAPSPDGWVEIHVHPRIKQISDGLTLLHAEFRMVCPGEGLPPELIQNMFNNSGWGTQEGLGLSMSRKILKLMNGEVQYIREAQRCYFYVLLELPVTRRSSKKC.

Residues 1–48 are disordered; the sequence is MASASGAENSSVPPSPLPPPPPPQIHTSRTKLSHHHHNNNNNNNNNID. Residues 13–24 are compositionally biased toward pro residues; the sequence is PPSPLPPPPPPQ. Positions 28 to 38 are enriched in basic residues; sequence SRTKLSHHHHN. Residues 267 to 449 form the GAF domain; that stretch reads DRVMVYRFHE…TQTLLCDMLL (183 aa). Residue cysteine 353 participates in phytochromobilin binding. 2 PAS domains span residues 641-712 and 775-846; these read VARE…LKGE and DYKA…MIVL. The 221-residue stretch at 923-1143 folds into the Histidine kinase domain; the sequence is YICQGVKNPL…YVLLELPVTR (221 aa).

This sequence belongs to the phytochrome family. In terms of assembly, heterodimer between subunit A and subunit B. In terms of processing, contains one covalently linked phytochromobilin chromophore.

Its function is as follows. Regulatory photoreceptor which exists in two forms that are reversibly interconvertible by light: the Pr form that absorbs maximally in the red region of the spectrum and the Pfr form that absorbs maximally in the far-red region. Photoconversion of Pr to Pfr induces an array of morphogenic responses, whereas reconversion of Pfr to Pr cancels the induction of those responses. Pfr controls the expression of a number of nuclear genes including those encoding the small subunit of ribulose-bisphosphate carboxylase, chlorophyll A/B binding protein, protochlorophyllide reductase, rRNA, etc. It also controls the expression of its own gene(s) in a negative feedback fashion. This Glycine max (Soybean) protein is Phytochrome B-2.